Here is a 130-residue protein sequence, read N- to C-terminus: Protein ApaG (130 aa).

The ApaG domain occupies 3–127 (RAVTRRIEVT…FSLDSPEGKR (125 aa)).

In Rhodopseudomonas palustris (strain ATCC BAA-98 / CGA009), this protein is Protein ApaG.